Consider the following 291-residue polypeptide: Segregation and condensation protein A (291 aa).

It belongs to the ScpA family. As to quaternary structure, component of a cohesin-like complex composed of ScpA, ScpB and the Smc homodimer, in which ScpA and ScpB bind to the head domain of Smc. The presence of the three proteins is required for the association of the complex with DNA.

It localises to the cytoplasm. Participates in chromosomal partition during cell division. May act via the formation of a condensin-like complex containing Smc and ScpB that pull DNA away from mid-cell into both cell halves. In Malacoplasma penetrans (strain HF-2) (Mycoplasma penetrans), this protein is Segregation and condensation protein A.